Here is a 311-residue protein sequence, read N- to C-terminus: MIDCAIIGGGPAGLSAGLYATRGGVKNAVLFEKGMPGGQITGSSEIENYPGVKEVVSGLDFMQPWQEQCFRFGLKHEMTAIQRVSKKGSHFVILAEDGKTFEAKSVIIATGGSPKRTGIKGESEYWGKGVSTCATCDGFFYKNKEVAVLGGGDTAVEEAIYLANICKKVYLIHRRDGFRCAPITLEHAKNNSKIEFLTPYVVEEIKGDASGVSSLSIKNTATNEKRELVVPGLFIFVGYDVNNAVLKQEDNSMLCECDEYGSIVVDFSMKTNVQGLFAAGDIRIFAPKQVVCAASDGATAALSVISYLEHH.

FAD contacts are provided by residues 31-39 (FEKGMPGGQ) and 32-39 (EKGMPGGQ). An intrachain disulfide couples Cys133 to Cys136. 281-290 (DIRIFAPKQV) contacts FAD.

Belongs to the class-II pyridine nucleotide-disulfide oxidoreductase family. As to quaternary structure, homodimer. The cofactor is FAD.

The protein resides in the cytoplasm. It carries out the reaction [thioredoxin]-dithiol + NADP(+) = [thioredoxin]-disulfide + NADPH + H(+). This is Thioredoxin reductase (trxB) from Helicobacter pylori (strain J99 / ATCC 700824) (Campylobacter pylori J99).